The sequence spans 497 residues: Aspartyl/glutamyl-tRNA(Asn/Gln) amidotransferase subunit B (497 aa).

This sequence belongs to the GatB/GatE family. GatB subfamily. As to quaternary structure, heterotrimer of A, B and C subunits.

It catalyses the reaction L-glutamyl-tRNA(Gln) + L-glutamine + ATP + H2O = L-glutaminyl-tRNA(Gln) + L-glutamate + ADP + phosphate + H(+). The enzyme catalyses L-aspartyl-tRNA(Asn) + L-glutamine + ATP + H2O = L-asparaginyl-tRNA(Asn) + L-glutamate + ADP + phosphate + 2 H(+). Its function is as follows. Allows the formation of correctly charged Asn-tRNA(Asn) or Gln-tRNA(Gln) through the transamidation of misacylated Asp-tRNA(Asn) or Glu-tRNA(Gln) in organisms which lack either or both of asparaginyl-tRNA or glutaminyl-tRNA synthetases. The reaction takes place in the presence of glutamine and ATP through an activated phospho-Asp-tRNA(Asn) or phospho-Glu-tRNA(Gln). This chain is Aspartyl/glutamyl-tRNA(Asn/Gln) amidotransferase subunit B, found in Rhodopirellula baltica (strain DSM 10527 / NCIMB 13988 / SH1).